A 451-amino-acid polypeptide reads, in one-letter code: Cobalamin reductase PduS (451 aa).

4Fe-4S ferredoxin-type domains are found at residues 255-284 (TVLSVAKTVCEQCRLCTDLCPRHLIGHELS) and 300-330 (PQLLLTALTCSECNVCESVACPVGISPMRIN). Residues C264, C267, C270, C274, C309, C312, C315, and C320 each coordinate [4Fe-4S] cluster.

The protein belongs to the PduS cobalamin reductase family. As to quaternary structure, monomer, forms a complex with PduO. Interacts with PduT, probably via the N-terminus of PduS. [4Fe-4S] cluster serves as cofactor. FMN is required as a cofactor.

It is found in the bacterial microcompartment. It functions in the pathway polyol metabolism; 1,2-propanediol degradation. A bifunctional cobalamin reductase that converts cob(III)alamin to cob(II)alamin and then to cob(I)alamin in the bacterial microcompartment (BMC) dedicated to 1,2-propanediol (1,2-PD) degradation. PduS and PduO allow regeneration of the adenosylcobalamin cofactor within the BMC. Cobalamin reduction probably occurs spontaneously in the presence of free reduced flavin nucleotides, this protein may be involved in electron transfer for this reduction. Its function is as follows. Expression of a cosmid containing the full 21-gene pdu operon in E.coli allows E.coli to grow on 1,2-propanediol (1,2-PD) with the appearance of BMCs in its cytoplasm. Functionally, the 1,2-PD-specific bacterial microcompartment (BMC) concentrates low levels of 1,2-PD catabolic enzymes, concentrates volatile reaction intermediates thus enhancing pathway flux and keeps the level of toxic, mutagenic propionaldehyde low. In Citrobacter freundii, this protein is Cobalamin reductase PduS.